The sequence spans 81 residues: MNAKVMLVCLLVTMLVMEPAEAGIWSWIKKTAKKVWNSDVAKKLKGKALNVAKDFVAEKIGATPAEAGQIPFDEFMNVLYS.

Positions 1–22 (MNAKVMLVCLLVTMLVMEPAEA) are cleaved as a signal peptide. A propeptide spanning residues 66-81 (EAGQIPFDEFMNVLYS) is cleaved from the precursor.

This sequence belongs to the non-disulfide-bridged peptide (NDBP) superfamily. Long chain multifunctional peptide (group 2) family. As to expression, expressed by the venom gland.

It is found in the secreted. The protein resides in the target cell membrane. In terms of biological role, at high concentrations, acts as a pore former in cellular membranes and causes the leakage of the cells. At submicromolar concentrations, degranulates granulocytes and has a weak hemolytic activity against human erythrocytes. Also strongly inhibits the production of superoxide anions. Has a strong antibacterial activity against Gram-negative bacteria but is less active against Gram-positive bacteria. Also has antifungal activity. This Urodacus yaschenkoi (Inland robust scorpion) protein is Antimicrobial peptide Con22.